A 294-amino-acid polypeptide reads, in one-letter code: ATP phosphoribosyltransferase (294 aa).

Belongs to the ATP phosphoribosyltransferase family. Long subfamily. The cofactor is Mg(2+).

The protein resides in the cytoplasm. The catalysed reaction is 1-(5-phospho-beta-D-ribosyl)-ATP + diphosphate = 5-phospho-alpha-D-ribose 1-diphosphate + ATP. It participates in amino-acid biosynthesis; L-histidine biosynthesis; L-histidine from 5-phospho-alpha-D-ribose 1-diphosphate: step 1/9. Feedback inhibited by histidine. Catalyzes the condensation of ATP and 5-phosphoribose 1-diphosphate to form N'-(5'-phosphoribosyl)-ATP (PR-ATP). Has a crucial role in the pathway because the rate of histidine biosynthesis seems to be controlled primarily by regulation of HisG enzymatic activity. The sequence is that of ATP phosphoribosyltransferase from Maricaulis maris (strain MCS10) (Caulobacter maris).